The chain runs to 749 residues: Amyloid-beta A4 precursor protein-binding family A member 2 (749 aa).

Disordered stretches follow at residues 1–94 (MAHR…PEEE), 130–220 (DTDE…GDLE), and 238–344 (SMTS…NIPE). At serine 11 the chain carries Phosphoserine. Residues 70 to 80 (GDSSSDYVNNT) are compositionally biased toward polar residues. Composition is skewed to acidic residues over residues 81–94 (SEEEDYDEGLPEEE) and 131–142 (TDECQEAVEEWT). Residues 185-270 (HYCASKEGYQ…SVEACPPIKA (86 aa)) form an STXBP1-binding region. Serine 208 carries the post-translational modification Phosphoserine. Residues 238 to 247 (SMTSITSASE) show a composition bias toward polar residues. Over residues 305–315 (RTPEERLKWPH) the composition is skewed to basic and acidic residues. Positions 368-555 (DGIIFAANYL…IINTQEMYND (188 aa)) constitute a PID domain. PDZ domains are found at residues 568–654 (ELQL…IVSC) and 659–734 (TVLI…TMPA).

Part of a multimeric complex containing STXBP1 and syntaxin-1. Binds to the cytoplasmic domain of amyloid-beta protein, and to the nuclear factor NF-kappa-B/p65 via its PDZ domain. Interacts with the N-terminal domain of NECAB3. As to expression, brain.

Its function is as follows. Putative function in synaptic vesicle exocytosis by binding to STXBP1, an essential component of the synaptic vesicle exocytotic machinery. May modulate processing of the amyloid-beta precursor protein (APP) and hence formation of APP-beta. The chain is Amyloid-beta A4 precursor protein-binding family A member 2 (APBA2) from Homo sapiens (Human).